The chain runs to 95 residues: Small ribosomal subunit protein bS6 (95 aa).

This sequence belongs to the bacterial ribosomal protein bS6 family.

Functionally, binds together with bS18 to 16S ribosomal RNA. This Symbiobacterium thermophilum (strain DSM 24528 / JCM 14929 / IAM 14863 / T) protein is Small ribosomal subunit protein bS6.